The sequence spans 446 residues: COBRA-like protein 1 (446 aa).

An N-terminal signal peptide occupies residues methionine 1–alanine 28. N-linked (GlcNAc...) asparagine glycans are attached at residues asparagine 37, asparagine 162, asparagine 170, asparagine 209, asparagine 234, asparagine 316, asparagine 331, asparagine 350, and asparagine 419. The GPI-anchor amidated alanine moiety is linked to residue alanine 420. Residues serine 421–alanine 446 constitute a propeptide, removed in mature form.

Belongs to the COBRA family.

Its subcellular location is the cell membrane. In terms of biological role, involved in determining the orientation of cell expansion, probably by playing an important role in cellulose deposition. May act by recruiting cellulose synthesizing complexes to discrete positions on the cell surface. The chain is COBRA-like protein 1 (BC1L6) from Oryza sativa subsp. japonica (Rice).